The chain runs to 168 residues: Photosystem I assembly protein Ycf3 (168 aa).

TPR repeat units lie at residues Ala35–Pro68, Ser72–Leu105, and Gly120–Asn153.

Belongs to the Ycf3 family.

It is found in the plastid membrane. Functionally, essential for the assembly of the photosystem I (PSI) complex. May act as a chaperone-like factor to guide the assembly of the PSI subunits. This Cuscuta gronovii (Common dodder) protein is Photosystem I assembly protein Ycf3.